The primary structure comprises 105 residues: Large ribosomal subunit protein uL24 (105 aa).

This sequence belongs to the universal ribosomal protein uL24 family. In terms of assembly, part of the 50S ribosomal subunit.

In terms of biological role, one of two assembly initiator proteins, it binds directly to the 5'-end of the 23S rRNA, where it nucleates assembly of the 50S subunit. Functionally, one of the proteins that surrounds the polypeptide exit tunnel on the outside of the subunit. This chain is Large ribosomal subunit protein uL24, found in Anaplasma marginale (strain St. Maries).